The following is a 301-amino-acid chain: tRNA-cytidine(32) 2-sulfurtransferase (301 aa).

Residues 47–52 (SGGKDS) carry the PP-loop motif motif. [4Fe-4S] cluster-binding residues include Cys122, Cys125, and Cys213.

The protein belongs to the TtcA family. Homodimer. Mg(2+) serves as cofactor. It depends on [4Fe-4S] cluster as a cofactor.

It localises to the cytoplasm. It catalyses the reaction cytidine(32) in tRNA + S-sulfanyl-L-cysteinyl-[cysteine desulfurase] + AH2 + ATP = 2-thiocytidine(32) in tRNA + L-cysteinyl-[cysteine desulfurase] + A + AMP + diphosphate + H(+). The protein operates within tRNA modification. Catalyzes the ATP-dependent 2-thiolation of cytidine in position 32 of tRNA, to form 2-thiocytidine (s(2)C32). The sulfur atoms are provided by the cysteine/cysteine desulfurase (IscS) system. This chain is tRNA-cytidine(32) 2-sulfurtransferase, found in Photobacterium profundum (strain SS9).